Here is a 186-residue protein sequence, read N- to C-terminus: MKTAHELRPGNVIMLDGSPWVVQKTETTRSGRNAAIVKLKLKHVLQDSSTESTFKGEDKMEDIILERLDCTYSYFADPMYVFMDAEYNQYDVEAENLGDAAAYIVDGMEENCQVTFYEGKAISVELPTSVVREVTYTEPSARGDTSGKVMKPATITGGGTLSVADFVKTGDMIEIDTRTNEFKKRV.

The protein belongs to the elongation factor P family.

The protein resides in the cytoplasm. The protein operates within protein biosynthesis; polypeptide chain elongation. Involved in peptide bond synthesis. Stimulates efficient translation and peptide-bond synthesis on native or reconstituted 70S ribosomes in vitro. Probably functions indirectly by altering the affinity of the ribosome for aminoacyl-tRNA, thus increasing their reactivity as acceptors for peptidyl transferase. This chain is Elongation factor P, found in Shewanella halifaxensis (strain HAW-EB4).